The primary structure comprises 407 residues: Amylovoran biosynthesis glycosyltransferase AmsK (407 aa).

The protein belongs to the glycosyltransferase group 1 family. Glycosyltransferase 4 subfamily.

It participates in glycan metabolism; exopolysaccharide biosynthesis. Its function is as follows. Involved in the biosynthesis of amylovoran which functions as a virulence factor. The polypeptide is Amylovoran biosynthesis glycosyltransferase AmsK (amsK) (Erwinia amylovora (Fire blight bacteria)).